A 203-amino-acid chain; its full sequence is Small ribosomal subunit protein uS4 (203 aa).

In terms of domain architecture, S4 RNA-binding spans 93 to 154; the sequence is CRFDNVVFRA…KSRNMDAVRN (62 aa).

Belongs to the universal ribosomal protein uS4 family. In terms of assembly, part of the 30S ribosomal subunit. Contacts protein S5. The interaction surface between S4 and S5 is involved in control of translational fidelity.

In terms of biological role, one of the primary rRNA binding proteins, it binds directly to 16S rRNA where it nucleates assembly of the body of the 30S subunit. With S5 and S12 plays an important role in translational accuracy. The sequence is that of Small ribosomal subunit protein uS4 from Chloroherpeton thalassium (strain ATCC 35110 / GB-78).